We begin with the raw amino-acid sequence, 514 residues long: Type-2 serine--tRNA ligase (514 aa).

Residue Ala313 participates in L-serine binding. Cys315 contributes to the Zn(2+) binding site. Residue Arg344 coordinates L-serine. Residues 344–346 and 355–356 each bind ATP; these read RWE and RV. 361-363 is an L-serine binding site; the sequence is RGE. Glu363 and Cys470 together coordinate Zn(2+). Arg477 provides a ligand contact to ATP.

It belongs to the class-II aminoacyl-tRNA synthetase family. Type-2 seryl-tRNA synthetase subfamily. In terms of assembly, homodimer. It depends on Zn(2+) as a cofactor.

It is found in the cytoplasm. It catalyses the reaction tRNA(Ser) + L-serine + ATP = L-seryl-tRNA(Ser) + AMP + diphosphate + H(+). It carries out the reaction tRNA(Sec) + L-serine + ATP = L-seryl-tRNA(Sec) + AMP + diphosphate + H(+). Its pathway is aminoacyl-tRNA biosynthesis; selenocysteinyl-tRNA(Sec) biosynthesis; L-seryl-tRNA(Sec) from L-serine and tRNA(Sec): step 1/1. Its function is as follows. Catalyzes the attachment of serine to tRNA(Ser). Is also able to aminoacylate tRNA(Sec) with serine, to form the misacylated tRNA L-seryl-tRNA(Sec), which will be further converted into selenocysteinyl-tRNA(Sec). This chain is Type-2 serine--tRNA ligase, found in Methanococcus maripaludis (strain C6 / ATCC BAA-1332).